The primary structure comprises 948 residues: Puromycin-sensitive aminopeptidase (948 aa).

Substrate contacts are provided by residues Glu206 and 341-345 (GAMEN). His377 is a Zn(2+) binding site. The active-site Proton acceptor is the Glu378. Zn(2+) is bound by residues His381 and Glu400.

Belongs to the peptidase M1 family. Zn(2+) serves as cofactor. As to expression, expressed mainly in intestinal cells in the posterior part of the intestine and in amphid sensory neurons and nerve ring neurons. Expressed in neurons in the male tail. Expressed in mature spermatids (at protein level).

The protein resides in the cytoplasm. Its subcellular location is the cell cortex. The protein localises to the chromosome. It is found in the cytoskeleton. It localises to the spindle pole. It carries out the reaction Release of an N-terminal amino acid, preferentially alanine, from a wide range of peptides, amides and arylamides.. Inhibited by chelating agent 1,10-phenanthroline, aminopeptidase inhibitors actinonin, amastatin, and leuhistin, and to a lesser extent by puromycin. Functionally, aminopeptidase. Required for the exit from meiosis, probably upstream of cyclin cyb-3. Involved in the establishment of the anterior-posterior polarity at the embryonic 1-cell stage by regulating the dynamics of sperm-donated centrosomes. Plays a role in oocyte maturation. Required for embryonic development. The chain is Puromycin-sensitive aminopeptidase from Caenorhabditis elegans.